A 315-amino-acid chain; its full sequence is 31 kDa ribonucleoprotein, chloroplastic (315 aa).

Residues 1–71 constitute a chloroplast transit peptide; the sequence is MSCATKPIIK…LSPKKKTSVS (71 aa). The interval 114–133 is disordered; that stretch reads AGESDEVEADEEEEEFQEPP. Over residues 115–133 the composition is skewed to acidic residues; the sequence is GESDEVEADEEEEEFQEPP. RRM domains lie at 136–214 and 230–308; these read AKLF…KAAR and YRIY…VAED.

Its subcellular location is the plastid. The protein resides in the chloroplast. Could be involved in splicing and/or processing of chloroplast RNA's. This chain is 31 kDa ribonucleoprotein, chloroplastic, found in Nicotiana sylvestris (Wood tobacco).